Here is a 366-residue protein sequence, read N- to C-terminus: Ribosomal RNA large subunit methyltransferase M (366 aa).

Residues S188, 221 to 224, D240, D260, and D277 contribute to the S-adenosyl-L-methionine site; that span reads CPGG. Residue K306 is the Proton acceptor of the active site.

It belongs to the class I-like SAM-binding methyltransferase superfamily. RNA methyltransferase RlmE family. RlmM subfamily. In terms of assembly, monomer.

It localises to the cytoplasm. The enzyme catalyses cytidine(2498) in 23S rRNA + S-adenosyl-L-methionine = 2'-O-methylcytidine(2498) in 23S rRNA + S-adenosyl-L-homocysteine + H(+). Catalyzes the 2'-O-methylation at nucleotide C2498 in 23S rRNA. This is Ribosomal RNA large subunit methyltransferase M from Shigella boydii serotype 4 (strain Sb227).